We begin with the raw amino-acid sequence, 272 residues long: Large ribosomal subunit protein uL29m (272 aa).

Disordered stretches follow at residues 1-29, 56-87, and 227-272; these read MAAAAMRPSMGALGRISSSTPSPLRPLTQ, KHRGESAIHRSGTRWRLSMSDEPLPRPVPRNK, and AAAT…TPRL. Over residues 17 to 29 the composition is skewed to low complexity; it reads SSSTPSPLRPLTQ. 2 stretches are compositionally biased toward low complexity: residues 227 to 238 and 249 to 259; these read AAATEGEQQAAE and PATAATPESAT. The segment covering 260 to 272 has biased composition (polar residues); it reads IPSSQQQTDTPRL.

This sequence belongs to the universal ribosomal protein uL29 family. Component of the mitochondrial large ribosomal subunit. Mature mitochondrial ribosomes consist of a small (37S) and a large (54S) subunit. The 37S subunit contains at least 33 different proteins and 1 molecule of RNA (15S). The 54S subunit contains at least 45 different proteins and 1 molecule of RNA (21S).

The protein resides in the mitochondrion. In Chaetomium globosum (strain ATCC 6205 / CBS 148.51 / DSM 1962 / NBRC 6347 / NRRL 1970) (Soil fungus), this protein is Large ribosomal subunit protein uL29m (MRPL4).